The primary structure comprises 153 residues: Large ribosomal subunit protein uL22 (153 aa).

The protein belongs to the universal ribosomal protein uL22 family. In terms of assembly, part of the 50S ribosomal subunit.

This protein binds specifically to 23S rRNA. It makes multiple contacts with different domains of the 23S rRNA in the assembled 50S subunit and ribosome. Its function is as follows. The globular domain of the protein is located near the polypeptide exit tunnel on the outside of the subunit, while an extended beta-hairpin is found that lines the wall of the exit tunnel in the center of the 70S ribosome. This Methanococcus maripaludis (strain DSM 14266 / JCM 13030 / NBRC 101832 / S2 / LL) protein is Large ribosomal subunit protein uL22.